Here is a 347-residue protein sequence, read N- to C-terminus: Histone deacetylase 11 (347 aa).

Residues 14-326 (TRWPIVYSPR…LNLFGLGLIG (313 aa)) form a histone deacetylase region. Histidine 143 is a catalytic residue.

This sequence belongs to the histone deacetylase family. As to quaternary structure, interacts with HDAC6. As to expression, weakly expressed in most tissues. Strongly expressed in brain, heart, skeletal muscle, kidney and testis.

It is found in the nucleus. The catalysed reaction is N(6)-acetyl-L-lysyl-[histone] + H2O = L-lysyl-[histone] + acetate. Responsible for the deacetylation of lysine residues on the N-terminal part of the core histones (H2A, H2B, H3 and H4). Histone deacetylation gives a tag for epigenetic repression and plays an important role in transcriptional regulation, cell cycle progression and developmental events. Histone deacetylases act via the formation of large multiprotein complexes. The chain is Histone deacetylase 11 (HDAC11) from Homo sapiens (Human).